Here is a 278-residue protein sequence, read N- to C-terminus: 2-dehydro-3-deoxyphosphooctonate aldolase (278 aa).

This sequence belongs to the KdsA family.

Its subcellular location is the cytoplasm. The enzyme catalyses D-arabinose 5-phosphate + phosphoenolpyruvate + H2O = 3-deoxy-alpha-D-manno-2-octulosonate-8-phosphate + phosphate. Its pathway is carbohydrate biosynthesis; 3-deoxy-D-manno-octulosonate biosynthesis; 3-deoxy-D-manno-octulosonate from D-ribulose 5-phosphate: step 2/3. It functions in the pathway bacterial outer membrane biogenesis; lipopolysaccharide biosynthesis. The protein is 2-dehydro-3-deoxyphosphooctonate aldolase of Dechloromonas aromatica (strain RCB).